A 710-amino-acid polypeptide reads, in one-letter code: Early transcription factor 82 kDa subunit (710 aa).

This sequence belongs to the poxviridae VETF large subunit family. In terms of assembly, heterodimer of a 70 kDa and a 82 kDa subunit. Part of the early transcription complex composed of ETF, RAP94/OPG109, and the DNA-directed RNA polymerase.

It is found in the virion. In terms of biological role, acts with RNA polymerase to initiate transcription from early gene promoters. Is recruited by the RPO-associated protein of 94 kDa RAP94/OPG109 to form the early transcription complex, which also contains the core RNA polymerase. ETF heterodimer binds to early gene promoters. This Monkeypox virus protein is Early transcription factor 82 kDa subunit (OPG133).